Here is a 200-residue protein sequence, read N- to C-terminus: Pyridoxal 5'-phosphate synthase subunit PdxT (200 aa).

An L-glutamine-binding site is contributed by 46 to 48 (GES). Catalysis depends on Cys78, which acts as the Nucleophile. Residues Arg107 and 138–139 (IR) contribute to the L-glutamine site. Active-site charge relay system residues include His175 and Glu177.

This sequence belongs to the glutaminase PdxT/SNO family. In the presence of PdxS, forms a dodecamer of heterodimers. Only shows activity in the heterodimer.

The enzyme catalyses aldehydo-D-ribose 5-phosphate + D-glyceraldehyde 3-phosphate + L-glutamine = pyridoxal 5'-phosphate + L-glutamate + phosphate + 3 H2O + H(+). It catalyses the reaction L-glutamine + H2O = L-glutamate + NH4(+). The protein operates within cofactor biosynthesis; pyridoxal 5'-phosphate biosynthesis. Catalyzes the hydrolysis of glutamine to glutamate and ammonia as part of the biosynthesis of pyridoxal 5'-phosphate. The resulting ammonia molecule is channeled to the active site of PdxS. This chain is Pyridoxal 5'-phosphate synthase subunit PdxT, found in Corynebacterium glutamicum (strain R).